The following is a 429-amino-acid chain: MYLLIVKKTDRLEGIVKAPPSKSYTHRAVIGASLADGVSRIINPLWGADCLSSVHGCRMLGANIELDKEKDEWIVKGGELKTPDNIIDIGNSGTTLRILTSIASQIPKGYAILTGDDSIRKRPMQPLLDALKQLNIEAFSSKLDGTAPIIVKSGKIYGNVVKIRGDISSQFITSLMMLLPFNKEDTEIILTSPLKSKPYIDITLDILNKFGIKIDKTDNGFLVYGNQKYKPIDYIVEGDYSSASYLIAAGVLINSNITIENLFANSKQGDKAIINIVKEMGADIKVKKDKVIIEGEYSLKGIDVDVKDIPDLVPTIAVLGCFAEGKTEIYNGEHVRLKECDRLRACAVELKKMGADIEEKPDGLIIRGVKKLKGAKLNTYHDHRLVMAFTIAGLKAEGETIIEGEEAVKISFPNFVDVMKSLGANIEVK.

3-phosphoshikimate contacts are provided by lysine 22, serine 23, and arginine 27. Lysine 22 lines the phosphoenolpyruvate pocket. Phosphoenolpyruvate contacts are provided by glycine 93 and arginine 122. Residues serine 168, serine 169, glutamine 170, serine 196, aspartate 311, and lysine 338 each contribute to the 3-phosphoshikimate site. Glutamine 170 is a binding site for phosphoenolpyruvate. The active-site Proton acceptor is aspartate 311. The phosphoenolpyruvate site is built by arginine 342 and arginine 384.

This sequence belongs to the EPSP synthase family. As to quaternary structure, monomer.

Its subcellular location is the cytoplasm. It carries out the reaction 3-phosphoshikimate + phosphoenolpyruvate = 5-O-(1-carboxyvinyl)-3-phosphoshikimate + phosphate. It functions in the pathway metabolic intermediate biosynthesis; chorismate biosynthesis. Its function is as follows. Catalyzes the transfer of the enolpyruvyl moiety of phosphoenolpyruvate (PEP) to the 5-hydroxyl of shikimate-3-phosphate (S3P) to produce enolpyruvyl shikimate-3-phosphate and inorganic phosphate. The sequence is that of 3-phosphoshikimate 1-carboxyvinyltransferase from Methanocaldococcus jannaschii (strain ATCC 43067 / DSM 2661 / JAL-1 / JCM 10045 / NBRC 100440) (Methanococcus jannaschii).